Consider the following 523-residue polypeptide: Peptide chain release factor 3 (523 aa).

Residues 10 to 277 (KKRRTFAIIS…SFVDLAPAPE (268 aa)) form the tr-type G domain. GTP is bound by residues 19–26 (SHPDAGKT), 87–91 (DTPGH), and 141–144 (NKLD).

The protein belongs to the TRAFAC class translation factor GTPase superfamily. Classic translation factor GTPase family. PrfC subfamily.

The protein localises to the cytoplasm. Increases the formation of ribosomal termination complexes and stimulates activities of RF-1 and RF-2. It binds guanine nucleotides and has strong preference for UGA stop codons. It may interact directly with the ribosome. The stimulation of RF-1 and RF-2 is significantly reduced by GTP and GDP, but not by GMP. This chain is Peptide chain release factor 3, found in Lactobacillus helveticus (strain DPC 4571).